The sequence spans 368 residues: tRNA-specific 2-thiouridylase MnmA (368 aa).

ATP is bound by residues 11-18 (GMSGGVDS) and Met37. Residues 97–99 (NPD) are interaction with target base in tRNA. The Nucleophile role is filled by Cys102. Residues Cys102 and Cys199 are joined by a disulfide bond. ATP is bound at residue Gly127. The tract at residues 149-151 (KDQ) is interaction with tRNA. Cys199 acts as the Cysteine persulfide intermediate in catalysis. The interaction with tRNA stretch occupies residues 311–312 (RY).

Belongs to the MnmA/TRMU family. In terms of assembly, interacts with TusE.

The protein resides in the cytoplasm. It catalyses the reaction S-sulfanyl-L-cysteinyl-[protein] + uridine(34) in tRNA + AH2 + ATP = 2-thiouridine(34) in tRNA + L-cysteinyl-[protein] + A + AMP + diphosphate + H(+). Functionally, catalyzes the 2-thiolation of uridine at the wobble position (U34) of tRNA(Lys), tRNA(Glu) and tRNA(Gln), leading to the formation of s(2)U34, the first step of tRNA-mnm(5)s(2)U34 synthesis. Sulfur is provided by IscS, via a sulfur-relay system. Binds ATP and its substrate tRNAs. The sequence is that of tRNA-specific 2-thiouridylase MnmA from Salmonella choleraesuis (strain SC-B67).